The chain runs to 149 residues: Putative pre-16S rRNA nuclease (149 aa).

It belongs to the YqgF nuclease family.

The protein localises to the cytoplasm. Its function is as follows. Could be a nuclease involved in processing of the 5'-end of pre-16S rRNA. In Burkholderia multivorans (strain ATCC 17616 / 249), this protein is Putative pre-16S rRNA nuclease.